A 317-amino-acid polypeptide reads, in one-letter code: MAKDSQKNLNVSNNNNVQCTMGRSSQNINKSDSKGKIKRCTYAYKILLCTIFIWICQCFYNKSYYVYKKDGRRNKGKKILGIRINKSLAEMDHTKYHPEYYDEVQENYDPYYGVNQYSDECESYKSEDDDSEEEYYNSTPRVTVLEPQTENSEDEENYEKTIVDELNELPNDKKALILSYIRNGNDNNMQLLPYANNNKQNTQENISRNKEFFRHFVDFIKGYKLFDSPVLNALLPFIFIAFVYCTITMLVGNVRYIIALYILAKILKMHYDYKHKENNNNNNNNNNNNNNNNNNNNNNNNNNNNNNNNNNKKSKKN.

A disordered region spans residues 1–32 (MAKDSQKNLNVSNNNNVQCTMGRSSQNINKSD). Positions 8-17 (NLNVSNNNNV) are enriched in low complexity. Over residues 18-30 (QCTMGRSSQNINK) the composition is skewed to polar residues. The PEXEL motif signature appears at 86–90 (KSLAE). The chain crosses the membrane as a helical span at residues 230–250 (VLNALLPFIFIAFVYCTITML). The essential for its function stretch occupies residues 265 to 317 (KILKMHYDYKHKENNNNNNNNNNNNNNNNNNNNNNNNNNNNNNNNNNKKSKKN). A disordered region spans residues 277–317 (ENNNNNNNNNNNNNNNNNNNNNNNNNNNNNNNNNNKKSKKN). Residues 279 to 311 (NNNNNNNNNNNNNNNNNNNNNNNNNNNNNNNNN) show a composition bias toward low complexity.

As to quaternary structure, may interact with MESA. May interact with J-dot compartment protein PF3D7_0801000.

The protein localises to the host cytoplasm. It localises to the vesicle. Its subcellular location is the membrane. Its function is as follows. During the asexual blood stage, plays an essential role in the recruitment and/or formation of EMP1-containing vesicles at the Maurer's clefts and their subsequent transfer to the host erythrocyte cell membrane. This Plasmodium falciparum (isolate 3D7) protein is EMP1 trafficking protein-7.